Here is a 650-residue protein sequence, read N- to C-terminus: Phosphomethylpyrimidine synthase (650 aa).

Residues N241, M270, Y299, H335, 355–357, 396–399, and E435 each bind substrate; these read SRG and DGLR. Position 439 (H439) interacts with Zn(2+). Y462 is a binding site for substrate. Zn(2+) is bound at residue H503. 3 residues coordinate [4Fe-4S] cluster: C583, C586, and C591.

This sequence belongs to the ThiC family. Homodimer. Requires [4Fe-4S] cluster as cofactor.

The catalysed reaction is 5-amino-1-(5-phospho-beta-D-ribosyl)imidazole + S-adenosyl-L-methionine = 4-amino-2-methyl-5-(phosphooxymethyl)pyrimidine + CO + 5'-deoxyadenosine + formate + L-methionine + 3 H(+). Its pathway is cofactor biosynthesis; thiamine diphosphate biosynthesis. In terms of biological role, catalyzes the synthesis of the hydroxymethylpyrimidine phosphate (HMP-P) moiety of thiamine from aminoimidazole ribotide (AIR) in a radical S-adenosyl-L-methionine (SAM)-dependent reaction. This is Phosphomethylpyrimidine synthase from Pseudoalteromonas translucida (strain TAC 125).